Reading from the N-terminus, the 323-residue chain is tRNA dimethylallyltransferase (323 aa).

An ATP-binding site is contributed by 27–34 (GPTGSGKT). 29–34 (TGSGKT) lines the substrate pocket. 2 interaction with substrate tRNA regions span residues 52–55 (DSRQ) and 176–180 (QRIVR).

This sequence belongs to the IPP transferase family. In terms of assembly, monomer. The cofactor is Mg(2+).

It carries out the reaction adenosine(37) in tRNA + dimethylallyl diphosphate = N(6)-dimethylallyladenosine(37) in tRNA + diphosphate. Its function is as follows. Catalyzes the transfer of a dimethylallyl group onto the adenine at position 37 in tRNAs that read codons beginning with uridine, leading to the formation of N6-(dimethylallyl)adenosine (i(6)A). The chain is tRNA dimethylallyltransferase from Desulfovibrio desulfuricans (strain ATCC 27774 / DSM 6949 / MB).